The primary structure comprises 807 residues: Glycerol-3-phosphate acyltransferase (807 aa).

An HXXXXD motif motif is present at residues 308-313 (CHRSHM).

This sequence belongs to the GPAT/DAPAT family.

It localises to the cell inner membrane. It carries out the reaction sn-glycerol 3-phosphate + an acyl-CoA = a 1-acyl-sn-glycero-3-phosphate + CoA. Its pathway is phospholipid metabolism; CDP-diacylglycerol biosynthesis; CDP-diacylglycerol from sn-glycerol 3-phosphate: step 1/3. In Shewanella sp. (strain MR-4), this protein is Glycerol-3-phosphate acyltransferase.